Here is a 639-residue protein sequence, read N- to C-terminus: Chaperone protein DnaK (639 aa).

T195 is modified (phosphothreonine; by autocatalysis). The span at 601-618 shows a compositional bias: low complexity; that stretch reads NAAAGAAPAGEPAPGEPQ. Residues 601–639 form a disordered region; sequence NAAAGAAPAGEPAPGEPQAEQKKDDGVIDAEYVDVDEKK. A compositionally biased stretch (acidic residues) spans 627 to 639; sequence VIDAEYVDVDEKK.

It belongs to the heat shock protein 70 family.

Its function is as follows. Acts as a chaperone. The chain is Chaperone protein DnaK from Acidobacterium capsulatum (strain ATCC 51196 / DSM 11244 / BCRC 80197 / JCM 7670 / NBRC 15755 / NCIMB 13165 / 161).